The primary structure comprises 171 residues: Mitochondrial import inner membrane translocase subunit Tim17-A (171 aa).

An intrachain disulfide couples C9 to C78. 3 helical membrane-spanning segments follow: residues 17 to 37 (CGGAFTMGTIGGGIFQAIKGF), 63 to 77 (GGSFAVWGGLFSMID), and 113 to 133 (VGSAAMGGILLALIEGAGILL). A disordered region spans residues 144–171 (GPQFAEDPSQLPSTQLPSSPFGDYRQYQ). Low complexity predominate over residues 151-163 (PSQLPSTQLPSSP).

The protein belongs to the Tim17/Tim22/Tim23 family. As to quaternary structure, component of the TIM23 complex at least composed of TIMM23, TIMM17 (TIMM17A or TIMM17B) and TIMM50. The complex interacts with the TIMM44 component of the PAM complex and with DNAJC15. Degraded by YMEL1 downstream of the integrated stress response (ISR).

Its subcellular location is the mitochondrion inner membrane. Its function is as follows. Essential component of the TIM23 complex, a complex that mediates the translocation of transit peptide-containing proteins across the mitochondrial inner membrane. This Homo sapiens (Human) protein is Mitochondrial import inner membrane translocase subunit Tim17-A (TIMM17A).